The primary structure comprises 273 residues: Epidermal growth factor-like protein 7 (273 aa).

The first 23 residues, 1-23, serve as a signal peptide directing secretion; that stretch reads MRGSQEVLLMWLLVLAVGGTEHA. Positions 27–104 constitute an EMI domain; the sequence is GRRVCAVRAH…TSGLPGACGA (78 aa). 9 disulfide bridges follow: cysteine 31–cysteine 89, cysteine 56–cysteine 62, cysteine 88–cysteine 102, cysteine 107–cysteine 117, cysteine 111–cysteine 123, cysteine 125–cysteine 134, cysteine 141–cysteine 152, cysteine 148–cysteine 161, and cysteine 163–cysteine 176. Residues 103–135 form the EGF-like 1 domain; it reads GAAICQPPCRNGGSCVQPGRCRCPAGWRGDTCQ. A Cell attachment site motif is present at residues 130-132; it reads RGD. In terms of domain architecture, EGF-like 2; calcium-binding spans 137–177; that stretch reads DVDECSARRGGCPQRCVNTAGSYWCQCWEGHSLSADGTLCV. Residues 192–219 adopt a coiled-coil conformation; it reads VDSAMKEEVQRLQSRVDLLEEKLQLVLA.

Interacts with ITGAV/ITGB3 in an RGD-dependent manner, increasing endothelial cell's motility.

Its subcellular location is the secreted. It localises to the extracellular space. Its function is as follows. Regulates vascular tubulogenesis in vivo. Inhibits platelet-derived growth factor (PDGF)-BB-induced smooth muscle cell migration and promotes endothelial cell adhesion to the extracellular matrix and angiogenesis. This Homo sapiens (Human) protein is Epidermal growth factor-like protein 7 (EGFL7).